The primary structure comprises 519 residues: Ribose import ATP-binding protein RbsA 2 (519 aa).

2 ABC transporter domains span residues 15-252 (FRLR…VGRP) and 262-506 (HEPG…TGVR). 47 to 54 (GENGAGKS) is an ATP binding site.

The protein belongs to the ABC transporter superfamily. Ribose importer (TC 3.A.1.2.1) family. As to quaternary structure, the complex is composed of an ATP-binding protein (RbsA), two transmembrane proteins (RbsC) and a solute-binding protein (RbsB).

The protein resides in the cell membrane. It carries out the reaction D-ribose(out) + ATP + H2O = D-ribose(in) + ADP + phosphate + H(+). In terms of biological role, part of the ABC transporter complex RbsABC involved in ribose import. Responsible for energy coupling to the transport system. The protein is Ribose import ATP-binding protein RbsA 2 of Rubrobacter xylanophilus (strain DSM 9941 / JCM 11954 / NBRC 16129 / PRD-1).